We begin with the raw amino-acid sequence, 141 residues long: Putative pre-16S rRNA nuclease (141 aa).

It belongs to the YqgF nuclease family.

The protein localises to the cytoplasm. In terms of biological role, could be a nuclease involved in processing of the 5'-end of pre-16S rRNA. This chain is Putative pre-16S rRNA nuclease, found in Vibrio parahaemolyticus serotype O3:K6 (strain RIMD 2210633).